We begin with the raw amino-acid sequence, 236 residues long: Baculoviral IAP repeat-containing protein 8 (236 aa).

Residues 7–70 (RLITFGTWMY…KWYPGCKYLL (64 aa)) form a BIR repeat. Residues C39, C42, H59, and C66 each contribute to the Zn(2+) site. An RING-type zinc finger spans residues 189-224 (CKICMDRHIAVVFIPCGHLVTCKQCAEAVDRCPMCS).

This sequence belongs to the IAP family. As to quaternary structure, binds to caspase-9.

It is found in the cytoplasm. Its function is as follows. Protects against apoptosis mediated by BAX. The chain is Baculoviral IAP repeat-containing protein 8 (BIRC8) from Pan troglodytes (Chimpanzee).